The primary structure comprises 686 residues: Aminodeoxychorismate synthase (686 aa).

One can recognise a Glutamine amidotransferase type-1 domain in the interval 2-194; it reads RTLLIDNYDS…RDLALAHHRA (193 aa). The active-site Nucleophile is C81. Residues H168 and E170 contribute to the active site. A PABB component region spans residues 233–686; the sequence is LDSSSVLEGA…LDGSAVAGAR (454 aa).

This sequence in the C-terminal section; belongs to the anthranilate synthase component I family.

The enzyme catalyses chorismate + L-glutamine = 4-amino-4-deoxychorismate + L-glutamate. It participates in antibiotic biosynthesis. Involved in chloramphenicol biosynthesis. Catalyzes the biosynthesis of 4-amino-4-deoxychorismate (ADC) from chorismate and glutamine. The chain is Aminodeoxychorismate synthase from Streptomyces venezuelae (strain ATCC 10712 / CBS 650.69 / DSM 40230 / JCM 4526 / NBRC 13096 / PD 04745).